We begin with the raw amino-acid sequence, 121 residues long: Large ribosomal subunit protein bL12 (121 aa).

It belongs to the bacterial ribosomal protein bL12 family. In terms of assembly, homodimer. Part of the ribosomal stalk of the 50S ribosomal subunit. Forms a multimeric L10(L12)X complex, where L10 forms an elongated spine to which 2 to 4 L12 dimers bind in a sequential fashion. Binds GTP-bound translation factors.

Forms part of the ribosomal stalk which helps the ribosome interact with GTP-bound translation factors. Is thus essential for accurate translation. The chain is Large ribosomal subunit protein bL12 from Lactobacillus delbrueckii subsp. bulgaricus (strain ATCC BAA-365 / Lb-18).